A 355-amino-acid polypeptide reads, in one-letter code: Ribosomal RNA small subunit methyltransferase H (355 aa).

Residues Gly47–Tyr49, Asp65, Phe92, Asp113, and Gln120 contribute to the S-adenosyl-L-methionine site. The interval Leu332–Arg355 is disordered. The span at Ser346–Arg355 shows a compositional bias: basic residues.

This sequence belongs to the methyltransferase superfamily. RsmH family.

It localises to the cytoplasm. The catalysed reaction is cytidine(1402) in 16S rRNA + S-adenosyl-L-methionine = N(4)-methylcytidine(1402) in 16S rRNA + S-adenosyl-L-homocysteine + H(+). Its function is as follows. Specifically methylates the N4 position of cytidine in position 1402 (C1402) of 16S rRNA. The protein is Ribosomal RNA small subunit methyltransferase H of Beijerinckia indica subsp. indica (strain ATCC 9039 / DSM 1715 / NCIMB 8712).